We begin with the raw amino-acid sequence, 477 residues long: MQIQLPMFQNSRVVVVGDVMLDRYWYGATSRISPEAPVPVVKVEQLEDRPGGAANVALNIAALGSAAVILGVTGKDEAAQSLAARMESAGILADFQEHETLPTITKLRVISRHQQLIRMDFEESFAGVPQEQLEKKVAGQLAGAGALVLSDYGKGALRDPQAFIQLARSKQIPVLVDPKGSDFEKYRGATLITPNLSEFEAVVGHCTSEAELVQRGLKLVEELELEALLVTRSEQGMTLLRAGRSELHLPAQAKEVFDVTGAGDTVISVLAAALAAGSEMGQAVALANIAAGIVVGKLGTASVSAPELRRAVQQEQGAGRGAMTVEQLKVALDDARAHGEKIVFTNGCFDIIHAGHVGYLDQARKLGDRLVVAINSDASVSRLKGPARPINPLERRMAVLAGLEAVDWVTWYEDDTPERLLEILKPDILVKGGDYSKEQVVGWEIVEGYGGEVRALDFLDNCSTTAIVEKIRKDQVK.

Residues 1–318 (MQIQLPMFQN…RRAVQQEQGA (318 aa)) form a ribokinase region. 195–198 (NLSE) contributes to the ATP binding site. Residue Asp264 is part of the active site. Residues 344–477 (FTNGCFDIIH…VEKIRKDQVK (134 aa)) form a cytidylyltransferase region.

It in the N-terminal section; belongs to the carbohydrate kinase PfkB family. In the C-terminal section; belongs to the cytidylyltransferase family. In terms of assembly, homodimer.

It catalyses the reaction D-glycero-beta-D-manno-heptose 7-phosphate + ATP = D-glycero-beta-D-manno-heptose 1,7-bisphosphate + ADP + H(+). It carries out the reaction D-glycero-beta-D-manno-heptose 1-phosphate + ATP + H(+) = ADP-D-glycero-beta-D-manno-heptose + diphosphate. It participates in nucleotide-sugar biosynthesis; ADP-L-glycero-beta-D-manno-heptose biosynthesis; ADP-L-glycero-beta-D-manno-heptose from D-glycero-beta-D-manno-heptose 7-phosphate: step 1/4. The protein operates within nucleotide-sugar biosynthesis; ADP-L-glycero-beta-D-manno-heptose biosynthesis; ADP-L-glycero-beta-D-manno-heptose from D-glycero-beta-D-manno-heptose 7-phosphate: step 3/4. Its function is as follows. Catalyzes the phosphorylation of D-glycero-D-manno-heptose 7-phosphate at the C-1 position to selectively form D-glycero-beta-D-manno-heptose-1,7-bisphosphate. Functionally, catalyzes the ADP transfer from ATP to D-glycero-beta-D-manno-heptose 1-phosphate, yielding ADP-D-glycero-beta-D-manno-heptose. The polypeptide is Bifunctional protein HldE (Hahella chejuensis (strain KCTC 2396)).